Here is a 205-residue protein sequence, read N- to C-terminus: Small ribosomal subunit protein uS5 (205 aa).

The disordered stretch occupies residues 1–25 (MSGAQRGQRGGERRGGRDDRRGQGA). Over residues 9 to 24 (RGGERRGGRDDRRGQG) the composition is skewed to basic and acidic residues. The region spanning 30 to 93 (YIERVVAINR…EEAKKHFFRV (64 aa)) is the S5 DRBM domain.

The protein belongs to the universal ribosomal protein uS5 family. In terms of assembly, part of the 30S ribosomal subunit. Contacts proteins S4 and S8.

Its function is as follows. With S4 and S12 plays an important role in translational accuracy. Located at the back of the 30S subunit body where it stabilizes the conformation of the head with respect to the body. In Nocardioides sp. (strain ATCC BAA-499 / JS614), this protein is Small ribosomal subunit protein uS5.